Consider the following 156-residue polypeptide: Endogenous retrovirus group K member 25 Pro protein (156 aa).

The Peptidase A2 domain occupies 21-96; it reads FEGLVDTGAD…IPLNLWGRDL (76 aa). Residue aspartate 26 is part of the active site. The 46-residue stretch at 111 to 156 folds into the G-patch domain; sequence YSPTSQKIMTKMGYIPGKGLGKNEDGIKIPVEAKINQKREGIGYPF.

It belongs to the peptidase A2 family. HERV class-II K(HML-2) subfamily. Active as a homodimer. In terms of processing, autoproteolytically processed at the N-terminus. Expected C-terminal autoprocessing not detected. The sequence shown is that of the processed Pro protein.

It catalyses the reaction Processing at the authentic HIV-1 PR recognition site and release of the mature p17 matrix and the p24 capsid protein, as a result of the cleavage of the -SQNY-|-PIVQ- cleavage site.. Functionally, retroviral proteases have roles in processing of the primary translation products and the maturation of the viral particle. Endogenous Pro proteins may have kept, lost or modified their original function during evolution. This endogenous protein has retained most of the characteristics of retroviral proteases. The sequence is that of Endogenous retrovirus group K member 25 Pro protein (ERVK-25) from Homo sapiens (Human).